We begin with the raw amino-acid sequence, 427 residues long: UPF0229 protein bll6755 (427 aa).

The interval 86–107 (DYLQRSGQGSAKDSGPGEGDSE) is disordered.

This sequence belongs to the UPF0229 family.

This is UPF0229 protein bll6755 from Bradyrhizobium diazoefficiens (strain JCM 10833 / BCRC 13528 / IAM 13628 / NBRC 14792 / USDA 110).